The following is a 145-amino-acid chain: Mannitol-specific phosphotransferase enzyme IIA component (145 aa).

The PTS EIIA type-2 domain maps to 4 to 143 (TILSTETIKV…QEVLAFLGEV (140 aa)). Residue histidine 64 is the Tele-phosphohistidine intermediate of the active site. Histidine 64 bears the Phosphohistidine; by HPr mark.

Its subcellular location is the cytoplasm. In terms of biological role, the phosphoenolpyruvate-dependent sugar phosphotransferase system (sugar PTS), a major carbohydrate active transport system, catalyzes the phosphorylation of incoming sugar substrates concomitantly with their translocation across the cell membrane. The enzyme II CmtAB PTS system is involved in D-mannitol transport. This chain is Mannitol-specific phosphotransferase enzyme IIA component (mtlF), found in Halalkalibacterium halodurans (strain ATCC BAA-125 / DSM 18197 / FERM 7344 / JCM 9153 / C-125) (Bacillus halodurans).